The chain runs to 350 residues: Glyceraldehyde-3-phosphate dehydrogenase (350 aa).

Residues 10-11 (RI), Asp36, Arg82, and Ser125 each bind NAD(+). D-glyceraldehyde 3-phosphate-binding positions include 161–163 (SCT), Thr193, 222–223 (TG), and Arg245. The Nucleophile role is filled by Cys162. Asn331 serves as a coordination point for NAD(+).

Belongs to the glyceraldehyde-3-phosphate dehydrogenase family. In terms of assembly, homotetramer.

It is found in the cytoplasm. The catalysed reaction is D-glyceraldehyde 3-phosphate + phosphate + NAD(+) = (2R)-3-phospho-glyceroyl phosphate + NADH + H(+). The protein operates within carbohydrate degradation; glycolysis; pyruvate from D-glyceraldehyde 3-phosphate: step 1/5. In terms of biological role, catalyzes the oxidative phosphorylation of glyceraldehyde 3-phosphate (G3P) to 1,3-bisphosphoglycerate (BPG) using the cofactor NAD. The first reaction step involves the formation of a hemiacetal intermediate between G3P and a cysteine residue, and this hemiacetal intermediate is then oxidized to a thioester, with concomitant reduction of NAD to NADH. The reduced NADH is then exchanged with the second NAD, and the thioester is attacked by a nucleophilic inorganic phosphate to produce BPG. The protein is Glyceraldehyde-3-phosphate dehydrogenase (gap) of Treponema pallidum (strain Nichols).